A 546-amino-acid chain; its full sequence is Hexose transporter HXT10 (546 aa).

The Cytoplasmic portion of the chain corresponds to 1–44 (MVSSSVSILGTSAKASTSLSRKDEIKLTPETREASLDIPYKPII). The helical transmembrane segment at 45-65 (AYWTVMGLCLMIAFGGFIFGW) threads the bilayer. Residues 66–100 (DTGTISGFINQTDFKRRFGELQRDGSFQLSDVRTG) lie on the Extracellular side of the membrane. N-linked (GlcNAc...) asparagine glycosylation is present at Asn-75. A helical transmembrane segment spans residues 101–121 (LIVGIFNIGCALGGLTLGRLG). The Cytoplasmic portion of the chain corresponds to 122–127 (DIYGRK). The chain crosses the membrane as a helical span at residues 128–148 (IGLMCVILVYVVGIVIQIASS). The Extracellular portion of the chain corresponds to 149 to 158 (DKWYQYFIGR). The helical transmembrane segment at 159–179 (IVSGMGVGGVAVLSPTLISEI) threads the bilayer. Residues 180–185 (SPKHLR) are Cytoplasmic-facing. Residues 186–206 (GTCVSFYQLMITLGIFLGYCT) form a helical membrane-spanning segment. Topologically, residues 207–220 (NYGTKKYSNSIQWR) are extracellular. Residues 221-241 (VPLGLCFAWAIFMVIGMVMVP) traverse the membrane as a helical segment. The Cytoplasmic segment spans residues 242–324 (ESPRYLVEKG…IQSLQQLTGC (83 aa)). A helical membrane pass occupies residues 325 to 341 (NYFFYYGTTIFNAVGMQ). At 342–347 (DSFETS) the chain is on the extracellular side. Residues 348 to 365 (IVLGAVNFASTFVALYIV) form a helical membrane-spanning segment. Topologically, residues 366-372 (DKFGRRK) are cytoplasmic. A helical transmembrane segment spans residues 373–393 (CLLWGSASMAICFVIFATVGV). The Extracellular segment spans residues 394 to 415 (TRLWPQGKDQPSSQSAGNVMIV). Residues 416–436 (FTCFFIFSFAITWAPIAYVIV) traverse the membrane as a helical segment. Residues 437–453 (AETYPLRVKNRAMAIAV) are Cytoplasmic-facing. The chain crosses the membrane as a helical span at residues 454–474 (GANWMWGFLIGFFTPFITRSI). Residue Gly-475 is a topological domain, extracellular. The helical transmembrane segment at 476-496 (FSYGYVFMGCLIFSYFYVFFF) threads the bilayer. Over 497–546 (VCETKGLTLEEVNEMYEERIKPWKSGGWIPSSRRTPQPTSSTPLVIVDSK) the chain is Cytoplasmic.

This sequence belongs to the major facilitator superfamily. Sugar transporter (TC 2.A.1.1) family.

Its subcellular location is the membrane. Functionally, probable glucose transporter. In Saccharomyces cerevisiae (strain ATCC 204508 / S288c) (Baker's yeast), this protein is Hexose transporter HXT10 (HXT10).